The primary structure comprises 564 residues: Dicarboxylate transporter 2, chloroplastic (564 aa).

A chloroplast-targeting transit peptide spans 1-22 (MESLALLPTLSLSTTTTTSKAT). Residues 35–58 (RRPHLSLSLSSTPKPTLTFSSHSH) form a disordered region. A compositionally biased stretch (low complexity) spans 39–58 (LSLSLSSTPKPTLTFSSHSH). The next 12 membrane-spanning stretches (helical) occupy residues 94–114 (GAKL…RFAV), 127–147 (LLAI…PVGA), 166–186 (TAFC…FFFA), 235–255 (AGGI…SLPG), 262–282 (LGTY…ALFL), 307–327 (VFWL…TPLI), 356–376 (VTKN…LWVF), 380–400 (IGVS…LLGV), 415–435 (TLAW…LGIV), 451–471 (LSWP…HYLF), 484–504 (AFLA…LALA), and 538–558 (MGFI…GVWW).

This sequence belongs to the SLC13A/DASS transporter (TC 2.A.47) family. DIT1 subfamily. In terms of tissue distribution, expressed in leaves.

It is found in the plastid. Its subcellular location is the chloroplast inner membrane. Glutamate/malate translocator involved with DIT1 in primary ammonia assimilation and in the re-assimilation of ammonia generated by the photorespiratory pathway. Exports the end product of ammonia assimilation, glutamate, from plastids to the cytosol. The precursor for ammonia assimilation, 2-oxoglutarate, is imported from the cytosol by DIT1. This Spinacia oleracea (Spinach) protein is Dicarboxylate transporter 2, chloroplastic (DIT2).